Consider the following 223-residue polypeptide: Deoxyribose-phosphate aldolase 2 (223 aa).

Asp-89 serves as the catalytic Proton donor/acceptor. Catalysis depends on Lys-152, which acts as the Schiff-base intermediate with acetaldehyde. Lys-181 serves as the catalytic Proton donor/acceptor.

It belongs to the DeoC/FbaB aldolase family. DeoC type 1 subfamily.

It localises to the cytoplasm. It carries out the reaction 2-deoxy-D-ribose 5-phosphate = D-glyceraldehyde 3-phosphate + acetaldehyde. It functions in the pathway carbohydrate degradation; 2-deoxy-D-ribose 1-phosphate degradation; D-glyceraldehyde 3-phosphate and acetaldehyde from 2-deoxy-alpha-D-ribose 1-phosphate: step 2/2. In terms of biological role, catalyzes a reversible aldol reaction between acetaldehyde and D-glyceraldehyde 3-phosphate to generate 2-deoxy-D-ribose 5-phosphate. This is Deoxyribose-phosphate aldolase 2 from Bacillus licheniformis (strain ATCC 14580 / DSM 13 / JCM 2505 / CCUG 7422 / NBRC 12200 / NCIMB 9375 / NCTC 10341 / NRRL NRS-1264 / Gibson 46).